The sequence spans 150 residues: Transcriptional regulator MraZ (150 aa).

2 SpoVT-AbrB domains span residues 11-53 (TYTP…PFDE) and 82-125 (AVDQ…NKDT).

This sequence belongs to the MraZ family. As to quaternary structure, forms oligomers.

The protein localises to the cytoplasm. It is found in the nucleoid. This Bifidobacterium longum (strain NCC 2705) protein is Transcriptional regulator MraZ.